The following is a 188-amino-acid chain: Apolipophorin-3 (188 aa).

The N-terminal stretch at 1–17 (MVAKLFVLVACIALSHA) is a signal peptide. A propeptide spanning residues 18 to 22 (AMVRR) is cleaved from the precursor.

It belongs to the insect apolipophorin-3 family. As to quaternary structure, equilibrium between a soluble monomer and a bound lipoprotein form. Apolipophorin-3 associates with lipophorin during lipid loading until each particle contains 9 or 14 molecules of apolipophorin-3. Expressed in fat body and secreted in hemolymph. Also expressed in ovary and testis at lower levels.

The protein resides in the secreted. Assists in the loading of diacylglycerol, generated from triacylglycerol stores in the fat body through the action of adipokinetic hormone, into lipophorin, the hemolymph lipoprotein. It increases the lipid carrying capacity of lipophorin by covering the expanding hydrophobic surface resulting from diacylglycerol uptake. It thus plays a critical role in the transport of lipids during flight in several species of insects. In Spodoptera litura (Asian cotton leafworm), this protein is Apolipophorin-3.